We begin with the raw amino-acid sequence, 202 residues long: Glycerol-3-phosphate acyltransferase (202 aa).

5 helical membrane-spanning segments follow: residues 3 to 23 (NLII…LILA), 87 to 107 (LLWS…YLLF), 118 to 138 (GAMI…WVVI), 144 to 164 (ISSL…FIFN), and 167 to 187 (LEIH…YKHL).

This sequence belongs to the PlsY family. As to quaternary structure, probably interacts with PlsX.

Its subcellular location is the cell inner membrane. The enzyme catalyses an acyl phosphate + sn-glycerol 3-phosphate = a 1-acyl-sn-glycero-3-phosphate + phosphate. It functions in the pathway lipid metabolism; phospholipid metabolism. Functionally, catalyzes the transfer of an acyl group from acyl-phosphate (acyl-PO(4)) to glycerol-3-phosphate (G3P) to form lysophosphatidic acid (LPA). This enzyme utilizes acyl-phosphate as fatty acyl donor, but not acyl-CoA or acyl-ACP. In Campylobacter jejuni (strain RM1221), this protein is Glycerol-3-phosphate acyltransferase.